Consider the following 261-residue polypeptide: Ribosomal RNA small subunit methyltransferase J (261 aa).

Residues 111–112 (RD), 127–128 (ER), 163–164 (SS), and Asp181 each bind S-adenosyl-L-methionine.

It belongs to the methyltransferase superfamily. RsmJ family.

The protein localises to the cytoplasm. The catalysed reaction is guanosine(1516) in 16S rRNA + S-adenosyl-L-methionine = N(2)-methylguanosine(1516) in 16S rRNA + S-adenosyl-L-homocysteine + H(+). Specifically methylates the guanosine in position 1516 of 16S rRNA. This Shewanella sp. (strain MR-7) protein is Ribosomal RNA small subunit methyltransferase J.